A 310-amino-acid chain; its full sequence is tRNA-cytidine(32) 2-sulfurtransferase (310 aa).

The PP-loop motif signature appears at 45-50 (SGGKDS). Positions 120, 123, and 211 each coordinate [4Fe-4S] cluster.

Belongs to the TtcA family. As to quaternary structure, homodimer. It depends on Mg(2+) as a cofactor. Requires [4Fe-4S] cluster as cofactor.

It is found in the cytoplasm. The enzyme catalyses cytidine(32) in tRNA + S-sulfanyl-L-cysteinyl-[cysteine desulfurase] + AH2 + ATP = 2-thiocytidine(32) in tRNA + L-cysteinyl-[cysteine desulfurase] + A + AMP + diphosphate + H(+). Its pathway is tRNA modification. Catalyzes the ATP-dependent 2-thiolation of cytidine in position 32 of tRNA, to form 2-thiocytidine (s(2)C32). The sulfur atoms are provided by the cysteine/cysteine desulfurase (IscS) system. The sequence is that of tRNA-cytidine(32) 2-sulfurtransferase from Shewanella baltica (strain OS195).